Consider the following 870-residue polypeptide: Glycerol-3-phosphate acyltransferase (870 aa).

A disordered region spans residues 1–27 (MPKKNSPLLPKETTPTQSSVDTSGSSN). A compositionally biased stretch (polar residues) spans 13–27 (TTPTQSSVDTSGSSN). Residues 351-356 (HRSHID) carry the HXXXXD motif motif.

It belongs to the GPAT/DAPAT family.

The protein resides in the cell inner membrane. It catalyses the reaction sn-glycerol 3-phosphate + an acyl-CoA = a 1-acyl-sn-glycero-3-phosphate + CoA. It participates in phospholipid metabolism; CDP-diacylglycerol biosynthesis; CDP-diacylglycerol from sn-glycerol 3-phosphate: step 1/3. This is Glycerol-3-phosphate acyltransferase (plsB) from Xylella fastidiosa (strain 9a5c).